A 706-amino-acid polypeptide reads, in one-letter code: Fatty acid oxidation complex subunit alpha (706 aa).

Residues 1–188 are enoyl-CoA hydratase; the sequence is MEKTFNLTRR…KMGLVNDVVP (188 aa). The segment at 308 to 706 is 3-hydroxyacyl-CoA dehydrogenase; that stretch reads RKVKKAVILG…TMAQENAHFF (399 aa).

It in the N-terminal section; belongs to the enoyl-CoA hydratase/isomerase family. In the central section; belongs to the 3-hydroxyacyl-CoA dehydrogenase family. In terms of assembly, heterotetramer of two alpha chains (FadJ) and two beta chains (FadI).

The protein resides in the cytoplasm. It catalyses the reaction a (3S)-3-hydroxyacyl-CoA = a (2E)-enoyl-CoA + H2O. The catalysed reaction is a 4-saturated-(3S)-3-hydroxyacyl-CoA = a (3E)-enoyl-CoA + H2O. It carries out the reaction a (3S)-3-hydroxyacyl-CoA + NAD(+) = a 3-oxoacyl-CoA + NADH + H(+). The enzyme catalyses (3S)-3-hydroxybutanoyl-CoA = (3R)-3-hydroxybutanoyl-CoA. Its pathway is lipid metabolism; fatty acid beta-oxidation. Functionally, catalyzes the formation of a hydroxyacyl-CoA by addition of water on enoyl-CoA. Also exhibits 3-hydroxyacyl-CoA epimerase and 3-hydroxyacyl-CoA dehydrogenase activities. The protein is Fatty acid oxidation complex subunit alpha of Shewanella baltica (strain OS155 / ATCC BAA-1091).